The following is a 195-amino-acid chain: HTH-type transcriptional regulator BetI (195 aa).

Residues 8–68 form the HTH tetR-type domain; it reads SIRRRQLIDA…ATMRDITSQL (61 aa). A DNA-binding region (H-T-H motif) is located at residues 31–50; sequence TIAQIARRAGVSTGIISHYF.

Its pathway is amine and polyamine biosynthesis; betaine biosynthesis via choline pathway [regulation]. Functionally, repressor involved in the biosynthesis of the osmoprotectant glycine betaine. It represses transcription of the choline transporter BetT and the genes of BetAB involved in the synthesis of glycine betaine. The chain is HTH-type transcriptional regulator BetI from Escherichia coli (strain K12 / DH10B).